The chain runs to 842 residues: Protein P (842 aa).

The interval 1 to 177 (MPLSYQHFRR…FCGSPYSWEQ (177 aa)) is terminal protein domain (TP). The spacer stretch occupies residues 178–345 (ELHHGAFLDG…YCLTHLVNLL (168 aa)). A disordered region spans residues 205 to 271 (SRPPVGSSIQ…RHAKNIASRP (67 aa)). Polar residues predominate over residues 223–239 (GPQSQQRPLDGSQQGRS). Residues 346–689 (EDWGPCTEHG…YLNLYPVARQ (344 aa)) are polymerase/reverse transcriptase domain (RT). In terms of domain architecture, Reverse transcriptase spans 356–599 (KHHIRIPRTP…YSLNFMGYVI (244 aa)). Mg(2+) is bound by residues Asp-428, Asp-550, and Asp-551.

The protein belongs to the hepadnaviridae P protein family.

The enzyme catalyses DNA(n) + a 2'-deoxyribonucleoside 5'-triphosphate = DNA(n+1) + diphosphate. It catalyses the reaction Endonucleolytic cleavage to 5'-phosphomonoester.. With respect to regulation, activated by host HSP70 and HSP40 in vitro to be able to bind the epsilon loop of the pgRNA. Because deletion of the RNase H region renders the protein partly chaperone-independent, the chaperones may be needed indirectly to relieve occlusion of the RNA-binding site by this domain. Inhibited by several reverse-transcriptase inhibitors: Lamivudine, Adefovir and Entecavir. Its function is as follows. Multifunctional enzyme that converts the viral RNA genome into dsDNA in viral cytoplasmic capsids. This enzyme displays a DNA polymerase activity that can copy either DNA or RNA templates, and a ribonuclease H (RNase H) activity that cleaves the RNA strand of RNA-DNA heteroduplexes in a partially processive 3'- to 5'-endonucleasic mode. Neo-synthesized pregenomic RNA (pgRNA) are encapsidated together with the P protein, and reverse-transcribed inside the nucleocapsid. Initiation of reverse-transcription occurs first by binding the epsilon loop on the pgRNA genome, and is initiated by protein priming, thereby the 5'-end of (-)DNA is covalently linked to P protein. Partial (+)DNA is synthesized from the (-)DNA template and generates the relaxed circular DNA (RC-DNA) genome. After budding and infection, the RC-DNA migrates in the nucleus, and is converted into a plasmid-like covalently closed circular DNA (cccDNA). The activity of P protein does not seem to be necessary for cccDNA generation, and is presumably released from (+)DNA by host nuclear DNA repair machinery. The protein is Protein P of Hepatitis B virus genotype E subtype ayw4 (isolate Kou) (HBV-E).